We begin with the raw amino-acid sequence, 424 residues long: Protein TUNICAMYCIN INDUCED 1 (424 aa).

The signal sequence occupies residues 1–25; that stretch reads MGHRVLVYVGALFLILFTIFPSSSA. Residues asparagine 197, asparagine 296, and asparagine 406 are each glycosylated (N-linked (GlcNAc...) asparagine).

As to expression, restricted to pollen grains at high levels.

The protein resides in the endoplasmic reticulum. Its function is as follows. Involved in the regulation of pollen surface morphology, probably by modulating the secretion of proteins and/or lipids during pollen development. This is Protein TUNICAMYCIN INDUCED 1 from Arabidopsis thaliana (Mouse-ear cress).